Consider the following 75-residue polypeptide: Mitotic-spindle organizing protein 1 (75 aa).

The protein belongs to the MOZART1 family. As to quaternary structure, part of the gamma-tubulin complex.

It localises to the cytoplasm. Its subcellular location is the cytoskeleton. The protein localises to the microtubule organizing center. The protein resides in the centrosome. It is found in the spindle. Required for gamma-tubulin complex recruitment to the centrosome. This chain is Mitotic-spindle organizing protein 1 (mzt1), found in Danio rerio (Zebrafish).